The primary structure comprises 421 residues: MSSILVEGGKSLRGEINISGAKNAALPIIVASLLSSKTLVINNVPQLSDVSDMLFILKSCGVHVEIVGSGTIALTANNISGHFSPPCNIVKKMRASIWILAPLLLRLGQVRIASPGGCAIGQRRIDLHLAALKAFGANIQLEDDYISANCSSRMHGISFKFDKVSVGATITAIMCAVLANGSTKLANCAQEPEIADLCYCLRKMGANITGIGTANISIIGVKELNGANYSIIPDRIEAGTYMVAAAITQGKIKLNNVIFKHLKSAITKLRLSGAIIQYQNENSLIIEGANIIKPLNIQTNPYPKFPTDLQAQFMSLMSIADGVSIITENIYENRYMHVFELIKMGANIVIQSREAVVTGVKKLHGADVIATDLRASVSLVLAGLSAVGITKVKRMHHLDRGYESLVEKLQNCNARVQRIPD.

Phosphoenolpyruvate is bound at residue 22 to 23 (KN). Arginine 94 serves as a coordination point for UDP-N-acetyl-alpha-D-glucosamine. The Proton donor role is filled by cysteine 118. Cysteine 118 carries the post-translational modification 2-(S-cysteinyl)pyruvic acid O-phosphothioketal. Residues 163–166 (KVSV), aspartate 308, and isoleucine 330 each bind UDP-N-acetyl-alpha-D-glucosamine.

This sequence belongs to the EPSP synthase family. MurA subfamily.

Its subcellular location is the cytoplasm. The enzyme catalyses phosphoenolpyruvate + UDP-N-acetyl-alpha-D-glucosamine = UDP-N-acetyl-3-O-(1-carboxyvinyl)-alpha-D-glucosamine + phosphate. The protein operates within cell wall biogenesis; peptidoglycan biosynthesis. Cell wall formation. Adds enolpyruvyl to UDP-N-acetylglucosamine. The polypeptide is UDP-N-acetylglucosamine 1-carboxyvinyltransferase (Orientia tsutsugamushi (strain Boryong) (Rickettsia tsutsugamushi)).